Consider the following 304-residue polypeptide: uncharacterized protein (304 aa).

The next 9 membrane-spanning stretches (helical) occupy residues 9–29 (VFYV…SIHF), 67–87 (IILY…GNMF), 100–120 (AGSI…GIFF), 131–151 (EFYI…INSS), 159–179 (FFLG…QNLI), 189–209 (AVVI…CLAF), 222–242 (IGML…GMLM), 252–272 (ITVF…IGYL), and 278–298 (INIY…LALK). 2 consecutive EamA domains span residues 13 to 148 (LLMG…IFVI) and 171 to 298 (FIQS…LALK).

This sequence belongs to the EamA transporter family.

The protein localises to the cell membrane. This is an uncharacterized protein from Haemophilus influenzae (strain ATCC 51907 / DSM 11121 / KW20 / Rd).